The primary structure comprises 478 residues: Calcitonin receptor (478 aa).

A signal peptide spans 1-22; the sequence is MRFTFTRQFLAFFILISNPASI. Residues 23–146 lie on the Extracellular side of the membrane; sequence LPRSENLTFP…FTPEKLQNAY (124 aa). Residues N28, N73, N125, and N130 are each glycosylated (N-linked (GlcNAc...) asparagine). Intrachain disulfides connect C55/C81, C72/C112, and C95/C134. The helical transmembrane segment at 147–169 threads the bilayer; that stretch reads VLYYLAIVGHSMSIITLVVSLGI. The Cytoplasmic segment spans residues 170–181; that stretch reads FVYFRSLGCQRV. A helical membrane pass occupies residues 182-202; it reads TLHKNMFLTYILNSMIIIIHL. The Extracellular segment spans residues 203 to 219; the sequence is VEVVPNGELVRKDPVSC. The cysteines at positions 219 and 289 are disulfide-linked. A helical membrane pass occupies residues 220-242; the sequence is KILHFFHQYMMACNYFWMLCEGI. Residues 243–259 lie on the Cytoplasmic side of the membrane; that stretch reads YLHTLIVVSVFNEAKHL. Residues 260 to 280 form a helical membrane-spanning segment; it reads RWYYLLGWGFPLVPTTIHAIT. The Extracellular segment spans residues 281–296; that stretch reads RALYFNDNCWISVDTH. Residues 297–320 traverse the membrane as a helical segment; that stretch reads LLYIIHGPVMVALVVNFFFLLNIV. Topologically, residues 321–340 are cytoplasmic; it reads RVLVTKMRETHEAESYMYLK. The chain crosses the membrane as a helical span at residues 341-359; that stretch reads AVKATMILVPLLGIQFVVF. Over 360–367 the chain is Extracellular; it reads PWRPSNKV. A helical transmembrane segment spans residues 368–394; that stretch reads LGKIYDYFMHSLIHFQGFFVATIYCFC. Residues 395-478 are Cytoplasmic-facing; that stretch reads NNEVQTTLKR…LNIIEKESSA (84 aa).

The protein belongs to the G-protein coupled receptor 2 family. In terms of assembly, heterodimer of CALCR and RAMP1, RAMP2 or RAMP3; the receptor complexes function as AMYR1, AMYR2 and AMYR3 receptors, respectively, and respond to amylin/IAPP, calcitonin/CT and CGRP1 ligands. Interacts with GPRASP2.

It localises to the cell membrane. Its function is as follows. G protein-coupled receptor activated by ligand peptides amylin (IAPP), calcitonin (CT/CALCA) and calcitonin gene-related peptide type 1 (CGRP1/CALCA). CALCR interacts with receptor-activity-modifying proteins RAMP1, 2 and 3 to form receptor complexes AMYR1, 2 and 3, respectively. IAPP, CT and CGRP1 activate CALCR and AMYRs with distinct modes of receptor activation resulting in specific phenotypes. Ligand binding causes a conformation change that triggers signaling via guanine nucleotide-binding proteins (G proteins) and modulates the activity of downstream effectors. Activates cAMP-dependent pathway. This chain is Calcitonin receptor, found in Cavia porcellus (Guinea pig).